The sequence spans 509 residues: tRNA-2-methylthio-N(6)-dimethylallyladenosine synthase (509 aa).

A disordered region spans residues 1–21 (MNEKQRIESGQVNPSDKKSEK). Residues 66-184 (RKFYIRTYGC…LPELLSEAYL (119 aa)) form the MTTase N-terminal domain. Cys-75, Cys-111, Cys-145, Cys-221, Cys-225, and Cys-228 together coordinate [4Fe-4S] cluster. The region spanning 207-437 (RTGKIKGWVN…NEVVNEISAK (231 aa)) is the Radical SAM core domain. One can recognise a TRAM domain in the interval 440 to 503 (KEYEGQVVEV…TWSLDGEMVG (64 aa)).

The protein belongs to the methylthiotransferase family. MiaB subfamily. In terms of assembly, monomer. [4Fe-4S] cluster serves as cofactor.

It is found in the cytoplasm. It carries out the reaction N(6)-dimethylallyladenosine(37) in tRNA + (sulfur carrier)-SH + AH2 + 2 S-adenosyl-L-methionine = 2-methylsulfanyl-N(6)-dimethylallyladenosine(37) in tRNA + (sulfur carrier)-H + 5'-deoxyadenosine + L-methionine + A + S-adenosyl-L-homocysteine + 2 H(+). In terms of biological role, catalyzes the methylthiolation of N6-(dimethylallyl)adenosine (i(6)A), leading to the formation of 2-methylthio-N6-(dimethylallyl)adenosine (ms(2)i(6)A) at position 37 in tRNAs that read codons beginning with uridine. The protein is tRNA-2-methylthio-N(6)-dimethylallyladenosine synthase of Bacillus licheniformis (strain ATCC 14580 / DSM 13 / JCM 2505 / CCUG 7422 / NBRC 12200 / NCIMB 9375 / NCTC 10341 / NRRL NRS-1264 / Gibson 46).